Reading from the N-terminus, the 505-residue chain is Peroxisome proliferator-activated receptor gamma (505 aa).

Positions 1 to 26 are disordered; the sequence is MGETLGDSLIDPESDSFADTLSASTS. The span at 17 to 26 shows a compositional bias: polar residues; it reads FADTLSASTS. A Phosphoserine; by MAPK modification is found at Ser-112. Residues 136 to 210 constitute a DNA-binding region (nuclear receptor); that stretch reads AIECRVCGDK…VGMSHNAIRF (75 aa). NR C4-type zinc fingers lie at residues 139–159 and 176–198; these read CRVC…CEGC and CDLN…FQKC. The interaction with FAM120B stretch occupies residues 205 to 280; it reads HNAIRFGRMP…DKSPFVIYDM (76 aa). The NR LBD domain maps to 238 to 503; that stretch reads DLRALAKHLY…HPLLQEIYKD (266 aa). Lys-252 participates in a covalent cross-link: Glycyl lysine isopeptide (Lys-Gly) (interchain with G-Cter in ubiquitin). The 9aaTAD motif lies at 495–503; it reads PLLQEIYKD.

The protein belongs to the nuclear hormone receptor family. NR1 subfamily. In terms of assembly, interacts with FOXO1 (acetylated form). Heterodimer with other nuclear receptors, such as RXRA. The heterodimer with the retinoic acid receptor RXRA is called adipocyte-specific transcription factor ARF6. Interacts with NCOA6 coactivator, leading to a strong increase in transcription of target genes. Interacts with coactivator PPARBP, leading to a mild increase in transcription of target genes. Interacts with NOCA7 in a ligand-inducible manner. Interacts with NCOA1 and NCOA2 LXXLL motifs. Interacts with ASXL1, ASXL2, DNTTIP2, FAM120B, MAP2K1/MEK1, NR0B2, PDPK1, PRDM16, PRMT2 and TGFB1I1. Interacts (when activated by agonist) with PPP5C. Interacts with HELZ2 and THRAP3; the interaction stimulates the transcriptional activity of PPARG. Interacts with PER2, the interaction is ligand dependent and blocks PPARG recruitment to target promoters. Interacts with NOCT. Interacts with ACTN4. Interacts (when in the liganded conformation) with GPS2. Interacts with CRY1 and CRY2 in a ligand-dependent manner. In the absence of hormonal ligand, interacts with TACC1. In macrophages, interacts with PAQR3 and STUB1; the interactions promote PPARG poylubiquitination and STUB1-mediated degradation. Phosphorylated at basal conditions and dephosphorylated when treated with the ligand. May be dephosphorylated by PPP5C. The phosphorylated form may be inactive and dephosphorylation induces adipogenic activity. Post-translationally, ubiquitinated by E3 ubiquitin-protein ligase complex containing FBXO9; leading to proteasomal degradation. Ubiquitinated at Lys-252 by TRIM55 leading to proteasomal degradation. Ubiquitinated by E3 ubiquitin-protein ligase STUB1/CHIP; leading to proteasomal degradation.

It is found in the nucleus. It localises to the cytoplasm. Its activity is regulated as follows. PDPK1 activates its transcriptional activity independently of its kinase activity. Nuclear receptor that binds peroxisome proliferators such as hypolipidemic drugs and fatty acids. Once activated by a ligand, the nuclear receptor binds to DNA specific PPAR response elements (PPRE) and modulates the transcription of its target genes, such as acyl-CoA oxidase. It therefore controls the peroxisomal beta-oxidation pathway of fatty acids. Key regulator of adipocyte differentiation and glucose homeostasis. ARF6 acts as a key regulator of the tissue-specific adipocyte P2 (aP2) enhancer. Acts as a critical regulator of gut homeostasis by suppressing NF-kappa-B-mediated pro-inflammatory responses. Plays a role in the regulation of cardiovascular circadian rhythms by regulating the transcription of BMAL1 in the blood vessels. This is Peroxisome proliferator-activated receptor gamma (PPARG) from Canis lupus familiaris (Dog).